A 570-amino-acid chain; its full sequence is Dihydroxy-acid dehydratase (570 aa).

A [2Fe-2S] cluster-binding site is contributed by Cys61. Residue Asp94 participates in Mg(2+) binding. Position 135 (Cys135) interacts with [2Fe-2S] cluster. Residues Asp136 and Lys137 each contribute to the Mg(2+) site. An N6-carboxylysine modification is found at Lys137. Cys207 serves as a coordination point for [2Fe-2S] cluster. Position 459 (Glu459) interacts with Mg(2+). Residue Ser485 is the Proton acceptor of the active site.

The protein belongs to the IlvD/Edd family. As to quaternary structure, homodimer. [2Fe-2S] cluster is required as a cofactor. It depends on Mg(2+) as a cofactor.

The catalysed reaction is (2R)-2,3-dihydroxy-3-methylbutanoate = 3-methyl-2-oxobutanoate + H2O. It carries out the reaction (2R,3R)-2,3-dihydroxy-3-methylpentanoate = (S)-3-methyl-2-oxopentanoate + H2O. Its pathway is amino-acid biosynthesis; L-isoleucine biosynthesis; L-isoleucine from 2-oxobutanoate: step 3/4. It functions in the pathway amino-acid biosynthesis; L-valine biosynthesis; L-valine from pyruvate: step 3/4. In terms of biological role, functions in the biosynthesis of branched-chain amino acids. Catalyzes the dehydration of (2R,3R)-2,3-dihydroxy-3-methylpentanoate (2,3-dihydroxy-3-methylvalerate) into 2-oxo-3-methylpentanoate (2-oxo-3-methylvalerate) and of (2R)-2,3-dihydroxy-3-methylbutanoate (2,3-dihydroxyisovalerate) into 2-oxo-3-methylbutanoate (2-oxoisovalerate), the penultimate precursor to L-isoleucine and L-valine, respectively. The chain is Dihydroxy-acid dehydratase from Lactococcus lactis subsp. cremoris (strain SK11).